Here is a 240-residue protein sequence, read N- to C-terminus: ATP-dependent Clp protease proteolytic subunit 2 (240 aa).

Ser132 functions as the Nucleophile in the catalytic mechanism. Residue His157 is part of the active site.

The protein belongs to the peptidase S14 family. Fourteen ClpP subunits assemble into 2 heptameric rings which stack back to back to give a disk-like structure with a central cavity, resembling the structure of eukaryotic proteasomes.

The protein localises to the cytoplasm. The catalysed reaction is Hydrolysis of proteins to small peptides in the presence of ATP and magnesium. alpha-casein is the usual test substrate. In the absence of ATP, only oligopeptides shorter than five residues are hydrolyzed (such as succinyl-Leu-Tyr-|-NHMec, and Leu-Tyr-Leu-|-Tyr-Trp, in which cleavage of the -Tyr-|-Leu- and -Tyr-|-Trp bonds also occurs).. Functionally, cleaves peptides in various proteins in a process that requires ATP hydrolysis. Has a chymotrypsin-like activity. Plays a major role in the degradation of misfolded proteins. This Synechococcus elongatus (strain ATCC 33912 / PCC 7942 / FACHB-805) (Anacystis nidulans R2) protein is ATP-dependent Clp protease proteolytic subunit 2.